The following is a 323-amino-acid chain: MATSSSLFHPIEKELYSVEHNLKSVAGTRHPILYAAAKHLFEAGGKRLRPAIVLLVAKSTSEQQEIKPGQRRLAEITEIIHTASLVHDDVIDECSTRRGEKTVHKLFNTKIAVLAGDFLFAQSSWYLANIGNLEVVKVITKVITDFAEGEIRQGLVHFDPSISIDDYIEKSFYKTASLVAASCRGAAMLNDLNSQMHNDLYLYGKHMGLAFQIMDDVLDIAGSTKSLGKPSGADFMNGNLTAPILFALTQEGKLDQLIQREFSDERDISLALFLIKKSGGITKAKDLAKEQVQAALCCLQFLPKSAPVSSLKELTHFIITRLS.

Residues Lys-46, Arg-49, and His-81 each coordinate isopentenyl diphosphate. 2 residues coordinate Mg(2+): Asp-88 and Asp-92. Arg-97 lines the an all-trans-polyprenyl diphosphate pocket. Position 98 (Arg-98) interacts with isopentenyl diphosphate. An all-trans-polyprenyl diphosphate is bound by residues Lys-174, Thr-175, and Gln-212.

It belongs to the FPP/GGPP synthase family. Mg(2+) serves as cofactor.

It is found in the plastid. Its subcellular location is the chloroplast. Functionally, possible role in synthesis of the nonaprenyl side chain of plastoquinone or in synthesis of other prenyl chains such as undekaprenyl pyrophosphate. The polypeptide is Prenyl transferase (preA) (Porphyra purpurea (Red seaweed)).